The chain runs to 295 residues: 3-hydroxy-5-phosphonooxypentane-2,4-dione thiolase (295 aa).

K203 serves as the catalytic Schiff-base intermediate with substrate.

It belongs to the DeoC/FbaB aldolase family. Homodecamer.

It is found in the cytoplasm. The catalysed reaction is dihydroxyacetone phosphate + acetyl-CoA = 3-hydroxy-2,4-dioxopentyl phosphate + CoA. Involved in the degradation of phospho-AI-2, thereby terminating induction of the lsr operon and closing the AI-2 signaling cycle. Catalyzes the transfer of an acetyl moiety from 3-hydroxy-5-phosphonooxypentane-2,4-dione to CoA to form glycerone phosphate and acetyl-CoA. This Enterobacter sp. (strain 638) protein is 3-hydroxy-5-phosphonooxypentane-2,4-dione thiolase.